The chain runs to 233 residues: Octanoyltransferase (233 aa).

The BPL/LPL catalytic domain maps to 34-212 (PDRPDVLLLL…AFAQTFELDL (179 aa)). Residues 76–83 (RGGEVTHH), 143–145 (AIG), and 156–158 (GFA) contribute to the substrate site. The Acyl-thioester intermediate role is filled by Cys174.

This sequence belongs to the LipB family.

It localises to the cytoplasm. It catalyses the reaction octanoyl-[ACP] + L-lysyl-[protein] = N(6)-octanoyl-L-lysyl-[protein] + holo-[ACP] + H(+). Its pathway is protein modification; protein lipoylation via endogenous pathway; protein N(6)-(lipoyl)lysine from octanoyl-[acyl-carrier-protein]: step 1/2. Its function is as follows. Catalyzes the transfer of endogenously produced octanoic acid from octanoyl-acyl-carrier-protein onto the lipoyl domains of lipoate-dependent enzymes. Lipoyl-ACP can also act as a substrate although octanoyl-ACP is likely to be the physiological substrate. The chain is Octanoyltransferase from Synechococcus elongatus (strain ATCC 33912 / PCC 7942 / FACHB-805) (Anacystis nidulans R2).